Reading from the N-terminus, the 115-residue chain is Evasin P1183 (115 aa).

A signal peptide spans 1 to 25 (MTRNWSFRVIFVSAMWCALLKFATL). Disulfide bonds link C38-C58, C54-C94, C70-C99, and C89-C108. 3 N-linked (GlcNAc...) asparagine glycosylation sites follow: N45, N72, and N103.

The protein resides in the secreted. Its function is as follows. Salivary chemokine-binding protein which binds to host chemokine CCL2. This Amblyomma triste (Neotropical tick) protein is Evasin P1183.